The sequence spans 623 residues: Chaperone protein HtpG (623 aa).

Residues Met1 to Arg341 form an a; substrate-binding region. A b region spans residues Glu342 to Lys549. A c region spans residues Ile550–Lys623.

It belongs to the heat shock protein 90 family. Homodimer.

It localises to the cytoplasm. Functionally, molecular chaperone. Has ATPase activity. In Clostridium perfringens (strain ATCC 13124 / DSM 756 / JCM 1290 / NCIMB 6125 / NCTC 8237 / Type A), this protein is Chaperone protein HtpG.